Reading from the N-terminus, the 200-residue chain is 3-isopropylmalate dehydratase small subunit (200 aa).

It belongs to the LeuD family. LeuD type 1 subfamily. As to quaternary structure, heterodimer of LeuC and LeuD.

It catalyses the reaction (2R,3S)-3-isopropylmalate = (2S)-2-isopropylmalate. It participates in amino-acid biosynthesis; L-leucine biosynthesis; L-leucine from 3-methyl-2-oxobutanoate: step 2/4. Functionally, catalyzes the isomerization between 2-isopropylmalate and 3-isopropylmalate, via the formation of 2-isopropylmaleate. The polypeptide is 3-isopropylmalate dehydratase small subunit (Actinobacillus pleuropneumoniae serotype 5b (strain L20)).